A 111-amino-acid chain; its full sequence is Large ribosomal subunit protein uL22 (111 aa).

This sequence belongs to the universal ribosomal protein uL22 family. As to quaternary structure, part of the 50S ribosomal subunit.

Functionally, this protein binds specifically to 23S rRNA; its binding is stimulated by other ribosomal proteins, e.g. L4, L17, and L20. It is important during the early stages of 50S assembly. It makes multiple contacts with different domains of the 23S rRNA in the assembled 50S subunit and ribosome. Its function is as follows. The globular domain of the protein is located near the polypeptide exit tunnel on the outside of the subunit, while an extended beta-hairpin is found that lines the wall of the exit tunnel in the center of the 70S ribosome. In Acidithiobacillus ferrooxidans (strain ATCC 23270 / DSM 14882 / CIP 104768 / NCIMB 8455) (Ferrobacillus ferrooxidans (strain ATCC 23270)), this protein is Large ribosomal subunit protein uL22.